The following is a 198-amino-acid chain: Copy number protein (198 aa).

It is found in the cell membrane. Functionally, involved in copy number control of pIP404. This basic and hydrophobic protein may exert its effect from the cytoplasmic membrane. The sequence is that of Copy number protein (cop) from Clostridium perfringens.